Reading from the N-terminus, the 353-residue chain is Holliday junction branch migration complex subunit RuvB (353 aa).

The segment at 1–183 is large ATPase domain (RuvB-L); the sequence is MNEPRIVAPQ…FGATYRLDFY (183 aa). Residues Leu-22, Arg-23, Gly-64, Lys-67, Thr-68, Thr-69, 130–132, Arg-173, Tyr-183, and Arg-220 each bind ATP; that span reads EDF. Thr-68 lines the Mg(2+) pocket. Positions 184–254 are small ATPAse domain (RuvB-S); that stretch reads DTAALRAIVE…LARLALDQLA (71 aa). The tract at residues 257-353 is head domain (RuvB-H); that stretch reads ELGLDEVDRL…HAASERSSDA (97 aa). Arg-312 and Arg-317 together coordinate DNA.

This sequence belongs to the RuvB family. Homohexamer. Forms an RuvA(8)-RuvB(12)-Holliday junction (HJ) complex. HJ DNA is sandwiched between 2 RuvA tetramers; dsDNA enters through RuvA and exits via RuvB. An RuvB hexamer assembles on each DNA strand where it exits the tetramer. Each RuvB hexamer is contacted by two RuvA subunits (via domain III) on 2 adjacent RuvB subunits; this complex drives branch migration. In the full resolvosome a probable DNA-RuvA(4)-RuvB(12)-RuvC(2) complex forms which resolves the HJ.

The protein resides in the cytoplasm. The enzyme catalyses ATP + H2O = ADP + phosphate + H(+). Functionally, the RuvA-RuvB-RuvC complex processes Holliday junction (HJ) DNA during genetic recombination and DNA repair, while the RuvA-RuvB complex plays an important role in the rescue of blocked DNA replication forks via replication fork reversal (RFR). RuvA specifically binds to HJ cruciform DNA, conferring on it an open structure. The RuvB hexamer acts as an ATP-dependent pump, pulling dsDNA into and through the RuvAB complex. RuvB forms 2 homohexamers on either side of HJ DNA bound by 1 or 2 RuvA tetramers; 4 subunits per hexamer contact DNA at a time. Coordinated motions by a converter formed by DNA-disengaged RuvB subunits stimulates ATP hydrolysis and nucleotide exchange. Immobilization of the converter enables RuvB to convert the ATP-contained energy into a lever motion, pulling 2 nucleotides of DNA out of the RuvA tetramer per ATP hydrolyzed, thus driving DNA branch migration. The RuvB motors rotate together with the DNA substrate, which together with the progressing nucleotide cycle form the mechanistic basis for DNA recombination by continuous HJ branch migration. Branch migration allows RuvC to scan DNA until it finds its consensus sequence, where it cleaves and resolves cruciform DNA. The chain is Holliday junction branch migration complex subunit RuvB from Thermomicrobium roseum (strain ATCC 27502 / DSM 5159 / P-2).